The sequence spans 571 residues: MSERKNLTDYVYKMVASLVQVGVENVVVSPGSRSTPLAYAVASTKQIKMYRQVDERSAAFFALGLAKATAKPVVLLCTSGTAAANYFPAIVEASYARVPLIIITADRPHELREVGAPQTINQPHLYGSHVKWSVDFPLADGAAPTLPFIERHIARAVAIATSAPFGPVHLNVPFREPLLIDLQDELPTMTFKHSSMGQLIPTTSAMQELSSILNSTRKGFMIVGELALGTDLAFLWEFVRQLKWPVIVESLSNMRAAVPEDCLPYLVTTYDAIMKSEDFKALVQPDTVLRIGAQPVSKFIMQFITKTQPSAYVIIDEDPMFRDATGVSTHFIHANIDQWLTHLTLTNTAFEESYLAEWQKANQLASTYIEQYSEIEKDEGAMVSRLLKMIPDGSDIFVSSSMPVRDIDTFLLATPKDIRFFANRGTNGIDGVVSTALGFSQGNDRETYLLIGDLAFLHDVNGLIATRYQECNLTILVMNNDGGGIFSYLPQSTVEAHYEDLFGTPTALEFQDIAHMYNMDYVRVDTIAELSGKFSSVKKRPLRLVEIFTDRAENVQAHRELWNRINAELKA.

It belongs to the TPP enzyme family. MenD subfamily. As to quaternary structure, homodimer. Requires Mg(2+) as cofactor. The cofactor is Mn(2+). Thiamine diphosphate serves as cofactor.

It carries out the reaction isochorismate + 2-oxoglutarate + H(+) = 5-enolpyruvoyl-6-hydroxy-2-succinyl-cyclohex-3-ene-1-carboxylate + CO2. It participates in quinol/quinone metabolism; 1,4-dihydroxy-2-naphthoate biosynthesis; 1,4-dihydroxy-2-naphthoate from chorismate: step 2/7. It functions in the pathway quinol/quinone metabolism; menaquinone biosynthesis. Functionally, catalyzes the thiamine diphosphate-dependent decarboxylation of 2-oxoglutarate and the subsequent addition of the resulting succinic semialdehyde-thiamine pyrophosphate anion to isochorismate to yield 2-succinyl-5-enolpyruvyl-6-hydroxy-3-cyclohexene-1-carboxylate (SEPHCHC). In Lysinibacillus sphaericus (strain C3-41), this protein is 2-succinyl-5-enolpyruvyl-6-hydroxy-3-cyclohexene-1-carboxylate synthase.